We begin with the raw amino-acid sequence, 643 residues long: Protein ecdysoneless homolog (643 aa).

Disordered regions lie at residues 428-458 (EFYN…NNFD) and 501-600 (IESM…FTPV). The span at 446–456 (AGSSSDANMNN) shows a compositional bias: polar residues. Positions 528–543 (MDFDDVEDDSEGEESN) are enriched in acidic residues. The segment covering 564 to 580 (NSTLEKSFENVNQQHSS) has biased composition (polar residues). Residues 581 to 592 (KQNEESSKTRDE) show a composition bias toward basic and acidic residues.

Belongs to the ECD family.

This is Protein ecdysoneless homolog from Arabidopsis thaliana (Mouse-ear cress).